The sequence spans 149 residues: Deoxyuridine 5'-triphosphate nucleotidohydrolase (149 aa).

Substrate is bound by residues 68 to 70, Asn81, 85 to 87, and Met95; these read RSG and LID.

It belongs to the dUTPase family. Mg(2+) is required as a cofactor.

It carries out the reaction dUTP + H2O = dUMP + diphosphate + H(+). The protein operates within pyrimidine metabolism; dUMP biosynthesis; dUMP from dCTP (dUTP route): step 2/2. Its function is as follows. This enzyme is involved in nucleotide metabolism: it produces dUMP, the immediate precursor of thymidine nucleotides and it decreases the intracellular concentration of dUTP so that uracil cannot be incorporated into DNA. The chain is Deoxyuridine 5'-triphosphate nucleotidohydrolase from Janthinobacterium sp. (strain Marseille) (Minibacterium massiliensis).